A 124-amino-acid chain; its full sequence is Small ribosomal subunit protein uS12 (124 aa).

A 3-methylthioaspartic acid modification is found at Asp89.

The protein belongs to the universal ribosomal protein uS12 family. As to quaternary structure, part of the 30S ribosomal subunit. Contacts proteins S8 and S17. May interact with IF1 in the 30S initiation complex.

Functionally, with S4 and S5 plays an important role in translational accuracy. Interacts with and stabilizes bases of the 16S rRNA that are involved in tRNA selection in the A site and with the mRNA backbone. Located at the interface of the 30S and 50S subunits, it traverses the body of the 30S subunit contacting proteins on the other side and probably holding the rRNA structure together. The combined cluster of proteins S8, S12 and S17 appears to hold together the shoulder and platform of the 30S subunit. The polypeptide is Small ribosomal subunit protein uS12 (Sodalis glossinidius (strain morsitans)).